The primary structure comprises 171 residues: MAEKRNIFLVGPMGAGKSTIGRHLAQMLHLEFHDSDQEIEQRTGADIAWVFDVEGEEGFRRREAQVIADLSEKQGIVLATGGGSVQSKDIRNHLSARGIVVYLETTIDKQVARTQRDKRRPLLQVDDPREVLENLAEIRNPLYEEIADVIVKTDDQSAKIVANQIIEQLGF.

14 to 19 (GAGKST) contributes to the ATP binding site. Serine 18 contributes to the Mg(2+) binding site. Substrate-binding residues include aspartate 36, arginine 60, and glycine 82. Arginine 120 is an ATP binding site. Arginine 139 contributes to the substrate binding site. Glutamine 156 contributes to the ATP binding site.

The protein belongs to the shikimate kinase family. Monomer. Mg(2+) serves as cofactor.

The protein resides in the cytoplasm. It catalyses the reaction shikimate + ATP = 3-phosphoshikimate + ADP + H(+). The protein operates within metabolic intermediate biosynthesis; chorismate biosynthesis; chorismate from D-erythrose 4-phosphate and phosphoenolpyruvate: step 5/7. Its function is as follows. Catalyzes the specific phosphorylation of the 3-hydroxyl group of shikimic acid using ATP as a cosubstrate. In Shewanella baltica (strain OS195), this protein is Shikimate kinase.